We begin with the raw amino-acid sequence, 556 residues long: HIRA-interacting protein 3 (556 aa).

S27 is subject to Phosphoserine. Residues 64–77 (DEAASREDKLDLTK) are compositionally biased toward basic and acidic residues. The interval 64 to 426 (DEAASREDKL…GRRGEDHPAV (363 aa)) is disordered. The residue at position 84 (T84) is a Phosphothreonine. Phosphoserine is present on residues S87, S98, S100, S125, S142, S143, S159, and S160. Over residues 99–108 (ESESGSEASS) the composition is skewed to low complexity. Basic and acidic residues predominate over residues 126 to 158 (PAKEENPRRASKAVEESSDEERQRDLPAQRGEE). Residues 168-177 (KGKTRKKPVV) show a composition bias toward basic residues. Phosphoserine occurs at positions 196, 199, 223, and 227. Residues 209–224 (KKVEGNKGTKSLKESE) are compositionally biased toward basic and acidic residues. Acidic residues predominate over residues 240-254 (EEEVEEEEKEEDEEK). Positions 260–269 (RTRSNGRRKS) are enriched in basic residues. S289 and S291 each carry phosphoserine. The span at 304–322 (DSGRDREPPVQRKSEDRTQ) shows a compositional bias: basic and acidic residues. Phosphoserine is present on residues S330, S332, S333, and S357. At T358 the chain carries Phosphothreonine. S359, S363, S370, and S372 each carry phosphoserine. Basic residues predominate over residues 385 to 396 (RSSKKSSRKGRT). The segment at 403-527 (SDGSPEAKGG…APPGELYRRT (125 aa)) is interaction with the histone H2A-H2B complex. Residue T471 is modified to Phosphothreonine. The segment at 502–556 (SGRPRRRTAWNPLGEAAPPGELYRRTLDSDEERPRPAPPDWSHMRGIISSDGESN) is disordered. The segment covering 523 to 536 (LYRRTLDSDEERPR) has biased composition (basic and acidic residues). 4 positions are modified to phosphoserine: S530, S550, S551, and S555.

Interacts (via C-terminus) with histone H2A-H2B dimers; the interaction is direct. Interacts with HIRA. Interacts with CK2. Phosphorylated by CK2. In terms of tissue distribution, widely expressed. Isoform 1 is predominant in skeletal muscle. Isoform 2 is predominant in liver and heart.

The protein localises to the nucleus. Histone chaperone that carries a H2A-H2B histone complex and facilitates its deposition onto chromatin. The chain is HIRA-interacting protein 3 (HIRIP3) from Homo sapiens (Human).